The following is a 142-amino-acid chain: Putative pre-16S rRNA nuclease (142 aa).

It belongs to the YqgF nuclease family.

Its subcellular location is the cytoplasm. Could be a nuclease involved in processing of the 5'-end of pre-16S rRNA. The sequence is that of Putative pre-16S rRNA nuclease from Staphylococcus aureus (strain bovine RF122 / ET3-1).